Consider the following 293-residue polypeptide: Glycine--tRNA ligase alpha subunit (293 aa).

The protein belongs to the class-II aminoacyl-tRNA synthetase family. In terms of assembly, tetramer of two alpha and two beta subunits.

It is found in the cytoplasm. The enzyme catalyses tRNA(Gly) + glycine + ATP = glycyl-tRNA(Gly) + AMP + diphosphate. This Prochlorococcus marinus (strain MIT 9211) protein is Glycine--tRNA ligase alpha subunit.